Consider the following 143-residue polypeptide: Large ribosomal subunit protein uL11 (143 aa).

Belongs to the universal ribosomal protein uL11 family. In terms of assembly, part of the ribosomal stalk of the 50S ribosomal subunit. Interacts with L10 and the large rRNA to form the base of the stalk. L10 forms an elongated spine to which L12 dimers bind in a sequential fashion forming a multimeric L10(L12)X complex. In terms of processing, one or more lysine residues are methylated.

Its function is as follows. Forms part of the ribosomal stalk which helps the ribosome interact with GTP-bound translation factors. This Paracidovorax citrulli (strain AAC00-1) (Acidovorax citrulli) protein is Large ribosomal subunit protein uL11.